Reading from the N-terminus, the 493-residue chain is NADH-quinone oxidoreductase subunit N (493 aa).

Transmembrane regions (helical) follow at residues 8 to 28, 34 to 54, 71 to 91, 102 to 122, 123 to 143, 157 to 177, 200 to 220, 232 to 252, 266 to 286, 294 to 314, 325 to 345, 370 to 390, 405 to 427, and 443 to 463; these read ALLP…AIAI, LVFW…PHAS, GLFF…LCLA, EIFV…SSAH, LAMF…MIAY, YLML…MVYG, ALAG…LVPF, PTPV…ALLL, FLCV…LLAL, LLAY…VAAG, IAFY…AISA, AAVL…VGFV, WPLV…RVVL, and PAAG…GLFP. Residues 473-493 form a disordered region; that stretch reads VPQPPPTADSPQRLTATGGLP.

The protein belongs to the complex I subunit 2 family. As to quaternary structure, NDH-1 is composed of 14 different subunits. Subunits NuoA, H, J, K, L, M, N constitute the membrane sector of the complex.

Its subcellular location is the cell inner membrane. It catalyses the reaction a quinone + NADH + 5 H(+)(in) = a quinol + NAD(+) + 4 H(+)(out). Functionally, NDH-1 shuttles electrons from NADH, via FMN and iron-sulfur (Fe-S) centers, to quinones in the respiratory chain. The immediate electron acceptor for the enzyme in this species is believed to be ubiquinone. Couples the redox reaction to proton translocation (for every two electrons transferred, four hydrogen ions are translocated across the cytoplasmic membrane), and thus conserves the redox energy in a proton gradient. In Methylococcus capsulatus (strain ATCC 33009 / NCIMB 11132 / Bath), this protein is NADH-quinone oxidoreductase subunit N.